The chain runs to 341 residues: S-adenosylmethionine:tRNA ribosyltransferase-isomerase (341 aa).

This sequence belongs to the QueA family. In terms of assembly, monomer.

The protein localises to the cytoplasm. The catalysed reaction is 7-aminomethyl-7-carbaguanosine(34) in tRNA + S-adenosyl-L-methionine = epoxyqueuosine(34) in tRNA + adenine + L-methionine + 2 H(+). It participates in tRNA modification; tRNA-queuosine biosynthesis. Its function is as follows. Transfers and isomerizes the ribose moiety from AdoMet to the 7-aminomethyl group of 7-deazaguanine (preQ1-tRNA) to give epoxyqueuosine (oQ-tRNA). In Citrifermentans bemidjiense (strain ATCC BAA-1014 / DSM 16622 / JCM 12645 / Bem) (Geobacter bemidjiensis), this protein is S-adenosylmethionine:tRNA ribosyltransferase-isomerase.